Here is a 312-residue protein sequence, read N- to C-terminus: Ribosomal protein L11 methyltransferase (312 aa).

Threonine 163, glycine 184, aspartate 206, and asparagine 248 together coordinate S-adenosyl-L-methionine.

The protein belongs to the methyltransferase superfamily. PrmA family.

The protein localises to the cytoplasm. It catalyses the reaction L-lysyl-[protein] + 3 S-adenosyl-L-methionine = N(6),N(6),N(6)-trimethyl-L-lysyl-[protein] + 3 S-adenosyl-L-homocysteine + 3 H(+). Functionally, methylates ribosomal protein L11. The sequence is that of Ribosomal protein L11 methyltransferase from Clostridium botulinum (strain Loch Maree / Type A3).